Consider the following 193-residue polypeptide: Thymidine kinase (193 aa).

ATP is bound by residues Gly-15–Thr-22 and Asp-87–His-90. Residue Glu-88 is the Proton acceptor of the active site. The Zn(2+) site is built by Cys-147, Cys-150, Cys-185, and Cys-188.

Belongs to the thymidine kinase family. Homotetramer.

The protein resides in the cytoplasm. It catalyses the reaction thymidine + ATP = dTMP + ADP + H(+). This Chloroflexus aurantiacus (strain ATCC 29366 / DSM 635 / J-10-fl) protein is Thymidine kinase.